Reading from the N-terminus, the 471-residue chain is UDP-N-acetylmuramate--L-alanine ligase (471 aa).

Residue glycine 112–threonine 118 participates in ATP binding.

The protein belongs to the MurCDEF family.

Its subcellular location is the cytoplasm. It catalyses the reaction UDP-N-acetyl-alpha-D-muramate + L-alanine + ATP = UDP-N-acetyl-alpha-D-muramoyl-L-alanine + ADP + phosphate + H(+). The protein operates within cell wall biogenesis; peptidoglycan biosynthesis. Its function is as follows. Cell wall formation. In Cupriavidus metallidurans (strain ATCC 43123 / DSM 2839 / NBRC 102507 / CH34) (Ralstonia metallidurans), this protein is UDP-N-acetylmuramate--L-alanine ligase.